Here is a 483-residue protein sequence, read N- to C-terminus: uncharacterized protein (483 aa).

One copy of the WD repeat lies at 96 to 137 (IQCDQDPLSSISWSPSGELLLWSSFDSKITVWSLNTQKGYLL).

This is an uncharacterized protein from Schizosaccharomyces pombe (strain 972 / ATCC 24843) (Fission yeast).